The primary structure comprises 488 residues: Cysteine desulfurase, mitochondrial (488 aa).

Residues 25–52 (LPKPLATSSSPATNAPNKTSNPKTGELH) are disordered. Residues 30 to 47 (ATSSSPATNAPNKTSNPK) are compositionally biased toward polar residues. Pyridoxal 5'-phosphate-binding positions include 157 to 158 (AT), Asn237, Gln265, and 285 to 287 (SSH). At Lys288 the chain carries N6-(pyridoxal phosphate)lysine. Residue Thr325 participates in pyridoxal 5'-phosphate binding. The Cysteine persulfide intermediate role is filled by Cys412. Cys412 provides a ligand contact to [2Fe-2S] cluster.

This sequence belongs to the class-V pyridoxal-phosphate-dependent aminotransferase family. NifS/IscS subfamily. Pyridoxal 5'-phosphate serves as cofactor.

It is found in the mitochondrion. The catalysed reaction is (sulfur carrier)-H + L-cysteine = (sulfur carrier)-SH + L-alanine. In terms of biological role, catalyzes the removal of elemental sulfur from cysteine to produce alanine. It supplies the inorganic sulfur for iron-sulfur (Fe-S) clusters. Plays a role in both tRNA-processing and mitochondrial metabolism. Involved in the 2-thio-modification of both 5-carboxymethylaminomethyl-2-thiouridine in mitochondrial tRNAs and 5-methoxycarbonylmethyl-2-thiouridine (mcm5s2U) in cytoplasmic tRNAs. The polypeptide is Cysteine desulfurase, mitochondrial (NFS1) (Candida albicans (strain SC5314 / ATCC MYA-2876) (Yeast)).